Consider the following 380-residue polypeptide: Glucose-1-phosphate adenylyltransferase (380 aa).

Alpha-D-glucose 1-phosphate contacts are provided by residues G164, 179-180, and S190; that span reads EK.

It belongs to the bacterial/plant glucose-1-phosphate adenylyltransferase family. Homotetramer.

The enzyme catalyses alpha-D-glucose 1-phosphate + ATP + H(+) = ADP-alpha-D-glucose + diphosphate. Its pathway is glycan biosynthesis; glycogen biosynthesis. In terms of biological role, involved in the biosynthesis of ADP-glucose, a building block required for the elongation reactions to produce glycogen. Catalyzes the reaction between ATP and alpha-D-glucose 1-phosphate (G1P) to produce pyrophosphate and ADP-Glc. This chain is Glucose-1-phosphate adenylyltransferase, found in Lactococcus lactis subsp. lactis (strain IL1403) (Streptococcus lactis).